Consider the following 558-residue polypeptide: GPI mannosyltransferase 3 (558 aa).

4 helical membrane-spanning segments follow: residues 53–73 (GLRSVLFPAVVALPFYLLKLL), 81–101 (VWFAPRVLQALVLTLIDVSVF), 164–184 (AYCGVRLYGNVIEALLVLLTL), and 190–210 (VPFLLLTGLASAIRVTSAVVL). An N-linked (GlcNAc...) asparagine glycan is attached at Asn-220. Residues 234–254 (IVLTGLIVLVAVLGGVMVLDY) form a helical membrane-spanning segment. N-linked (GlcNAc...) asparagine glycosylation occurs at Asn-275. The next 4 membrane-spanning stretches (helical) occupy residues 292–312 (VLVGIVGPHVLFTIAAPLVLW), 323–343 (PVLGMLGIGAWTLGFYSLIDH), 348–368 (FVFVVIPLSLITAAFVLVRWS), and 372–392 (AVVVKMNRLFVLFNIVMIYLM).

The protein belongs to the glycosyltransferase 22 family. PIGB subfamily.

Its subcellular location is the endoplasmic reticulum membrane. The protein operates within glycolipid biosynthesis; glycosylphosphatidylinositol-anchor biosynthesis. In terms of biological role, mannosyltransferase involved in glycosylphosphatidylinositol-anchor biosynthesis. Transfers the third alpha-1,2-mannose to Man2-GlcN-acyl-PI during GPI precursor assembly. The sequence is that of GPI mannosyltransferase 3 (GPI10) from Trypanosoma brucei brucei.